Reading from the N-terminus, the 680-residue chain is Galactose oxidase (680 aa).

An N-terminal signal peptide occupies residues 1-24; it reads MKHLLTLALCFSSINAVAVTVPHK. A propeptide spanning residues 25–41 is cleaved from the precursor; sequence AVGTGIPEGSLQFLSLR. The F5/8 type C domain maps to 42–189; the sequence is ASAPIGSAIS…SIAEINVFQA (148 aa). An intrachain disulfide couples cysteine 59 to cysteine 68. 5 Kelch repeats span residues 223–268, 279–321, 323–372, 436–490, and 492–544; these read RVLM…HDMF, QIVV…TMSD, RVFT…LYRS, KILT…VLPD, and STFI…LLLP. Positions 269–313 form a cross-link, 3'-(S-cysteinyl)-tyrosine (Cys-Tyr); that stretch reads CPGISMDGNGQIVVTGGNDAKKTSLYDSSSDSWIPGPDMQVARGY. Position 313 (tyrosine 313) interacts with Cu cation. Cu cation-binding residues include tyrosine 536 and histidine 537. Tyrosine 536 (proton acceptor) is an active-site residue. Cysteine 556 and cysteine 559 are joined by a disulfide. Histidine 622 contributes to the Cu cation binding site.

Monomer. It depends on Cu(2+) as a cofactor. Post-translationally, galactose oxidase contains a protein-derived free radical cofactor. In the active state, Tyr-313, which is cross-linked to Cys-269 via a thioether bond, is oxidized to a radical and acts with Cu(2+) as a two-electron acceptor in the oxidation reaction. The cross-link is believed to modulate the redox potential of the tyrosyl radical, which is further stabilized by a stacking interaction with Trp-331 in the active site. The post-translational formation of the cross-link is closely linked to the propeptide cleavage event, and both are copper-dependent, autocatalytic processes. The propeptide may act as an intramolecular chaperone, facilitating thioester bond formation and copper binding by positioning of active-site residues, including copper ligands.

The protein resides in the secreted. The enzyme catalyses D-galactose + O2 = D-galacto-hexodialdose + H2O2. Inhibited by diethyldithiocarbamate. Catalyzes the sterospecific oxidation of primary alcohols to the corresponding aldehydes. The biologically relevant substrate of the enzyme is not known as the enzyme exhibits broad substrate specificity from small alcohols through sugars to oligo- and polysaccharides. This Gibberella zeae (Wheat head blight fungus) protein is Galactose oxidase (GAOA).